Reading from the N-terminus, the 150-residue chain is Transcription antitermination protein NusB (150 aa).

This sequence belongs to the NusB family.

Involved in transcription antitermination. Required for transcription of ribosomal RNA (rRNA) genes. Binds specifically to the boxA antiterminator sequence of the ribosomal RNA (rrn) operons. In Streptococcus pyogenes serotype M4 (strain MGAS10750), this protein is Transcription antitermination protein NusB.